Reading from the N-terminus, the 1050-residue chain is NAD-specific glutamate dehydrogenase (1050 aa).

The interval 1–39 is disordered; sequence MDSPSAPVPAHKLVDRLKDQTPRHPSPQPTHVSYPKVNG. Residues 12–22 show a composition bias toward basic and acidic residues; the sequence is KLVDRLKDQTP. Lysine 594 is an active-site residue.

This sequence belongs to the Glu/Leu/Phe/Val dehydrogenases family. As to quaternary structure, homotetramer.

The catalysed reaction is L-glutamate + NAD(+) + H2O = 2-oxoglutarate + NH4(+) + NADH + H(+). This chain is NAD-specific glutamate dehydrogenase (gdh-1), found in Neurospora crassa (strain ATCC 24698 / 74-OR23-1A / CBS 708.71 / DSM 1257 / FGSC 987).